Consider the following 238-residue polypeptide: Lipid transferase CIDEC (238 aa).

Positions 1 to 35 are required for liquid-liquid phase separation (LLPS); sequence MEYAMKSLSLLYPKSLSRHVSVRTSVVTQQLLSEP. One can recognise a CIDE-N domain in the interval 41–118; the sequence is RARPCRVSTA…VLQKGQKWQP (78 aa).

The protein belongs to the CIDE family. Homodimer. Homooligomer; undergoes liquid-liquid phase separation (LLPS) via its N-terminus, facilitating lipid droplet fusion, occurs at the lipid droplet contact sites. Interacts with CIDEA. Interacts with PLIN1. Interacts with NFAT5; this interaction is direct and retains NFAT5 in the cytoplasm. Interacts with CEBPB. Interacts with isoform CLSTN3beta of CLSTN3; inhibiting the lipid transferase activity of CIDEC. In terms of processing, ubiquitinated and targeted to proteasomal degradation, resulting in a short half-life (about 15 minutes in 3T3-L1 cells). Protein stability depends on triaclyglycerol synthesis, fatty acid availability and lipid droplet formation. In terms of tissue distribution, expressed mainly in adipose tissue, small intestine, heart, colon and stomach and, at lower levels, in brain, kidney and liver.

The protein localises to the lipid droplet. Its subcellular location is the endoplasmic reticulum. It is found in the nucleus. It carries out the reaction a triacyl-sn-glycerol(in) = a triacyl-sn-glycerol(out). Functionally, lipid transferase specifically expressed in white adipose tissue, which promotes unilocular lipid droplet formation by mediating lipid droplet fusion. Lipid droplet fusion promotes their enlargement, restricting lipolysis and favoring lipid storage. Localizes on the lipid droplet surface, at focal contact sites between lipid droplets, and mediates atypical lipid droplet fusion by undergoing liquid-liquid phase separation (LLPS) and promoting directional net neutral lipid transfer from the smaller to larger lipid droplets. The transfer direction may be driven by the internal pressure difference between the contacting lipid droplet pair. Its role in neutral lipid transfer and lipid droplet enlargement is activated by the interaction with PLIN1. May also act as a CEBPB coactivator in the white adipose tissue to control the expression of a subset of CEBPB downstream target genes, including SOCS1, SOCS3, TGFB1, TGFBR1, ID2 and XDH. When overexpressed in preadipocytes, induces apoptosis or increases cell susceptibility to apoptosis induced by serum deprivation or TGFB treatment. This Homo sapiens (Human) protein is Lipid transferase CIDEC.